Consider the following 97-residue polypeptide: Lipolysis-activating peptide 1-alpha chain (97 aa).

The first 21 residues, 1 to 21 (MNITLFCSVFILISLAGLSVS), serve as a signal peptide directing secretion. An LCN-type CS-alpha/beta domain is found at 25-88 (PGNYPMSLYG…FWAAHKNHCK (64 aa)). 3 cysteine pairs are disulfide-bonded: cysteine 39–cysteine 62, cysteine 48–cysteine 67, and cysteine 52–cysteine 69.

Belongs to the long (3 C-C) scorpion toxin superfamily. Monomer (edited version) and heterodimer (non-edited version) of this alpha chain and a beta chain (AC D9U2A2). In terms of tissue distribution, expressed by the venom gland.

The protein resides in the secreted. In terms of biological role, the heterodimer non-edited LVP1 induces lipolysis in rat adipocytes. Induction of lipolysis by LVP1 appears to be mediated through the beta-2 adrenergic receptor pathway (ADRB2). Functionally, the edited BmKBTx-like, similar to beta-toxins, may modulate voltage-gated sodium channels (Nav) and may block voltage-gated potassium channels (Kv). The protein is Lipolysis-activating peptide 1-alpha chain of Lychas mucronatus (Chinese swimming scorpion).